Consider the following 149-residue polypeptide: Macrodomain Ter protein (149 aa).

Belongs to the MatP family. In terms of assembly, homodimer.

Its subcellular location is the cytoplasm. Its function is as follows. Required for spatial organization of the terminus region of the chromosome (Ter macrodomain) during the cell cycle. Prevents early segregation of duplicated Ter macrodomains during cell division. Binds specifically to matS, which is a 13 bp signature motif repeated within the Ter macrodomain. In Vibrio campbellii (strain ATCC BAA-1116), this protein is Macrodomain Ter protein.